Here is a 101-residue protein sequence, read N- to C-terminus: Signal recognition particle 19 kDa protein (101 aa).

It belongs to the SRP19 family. In terms of assembly, part of the signal recognition particle protein translocation system, which is composed of SRP and FtsY. Archaeal SRP consists of a 7S RNA molecule of 300 nucleotides and two protein subunits: SRP54 and SRP19.

It is found in the cytoplasm. Involved in targeting and insertion of nascent membrane proteins into the cytoplasmic membrane. Binds directly to 7S RNA and mediates binding of the 54 kDa subunit of the SRP. This Thermofilum pendens (strain DSM 2475 / Hrk 5) protein is Signal recognition particle 19 kDa protein.